The sequence spans 332 residues: Ferredoxin--NADP reductase (332 aa).

Residues aspartate 33, glutamine 41, tyrosine 46, alanine 86, methionine 121, aspartate 282, and serine 325 each coordinate FAD.

It belongs to the ferredoxin--NADP reductase type 2 family. Homodimer. FAD is required as a cofactor.

It catalyses the reaction 2 reduced [2Fe-2S]-[ferredoxin] + NADP(+) + H(+) = 2 oxidized [2Fe-2S]-[ferredoxin] + NADPH. The sequence is that of Ferredoxin--NADP reductase from Sulfurisphaera tokodaii (strain DSM 16993 / JCM 10545 / NBRC 100140 / 7) (Sulfolobus tokodaii).